The sequence spans 718 residues: Catalase-peroxidase (718 aa).

Positions 92–220 (WHAAGTYRTA…LASVMMGLIY (129 aa)) form a cross-link, tryptophyl-tyrosyl-methioninium (Trp-Tyr) (with M-246). Catalysis depends on His-93, which acts as the Proton acceptor. The segment at residues 220 to 246 (YVNPEGVDGHPDPLKTANDVRVTFERM) is a cross-link (tryptophyl-tyrosyl-methioninium (Tyr-Met) (with W-92)). His-261 contacts heme b.

This sequence belongs to the peroxidase family. Peroxidase/catalase subfamily. As to quaternary structure, homodimer or homotetramer. It depends on heme b as a cofactor. Post-translationally, formation of the three residue Trp-Tyr-Met cross-link is important for the catalase, but not the peroxidase activity of the enzyme.

The catalysed reaction is H2O2 + AH2 = A + 2 H2O. It catalyses the reaction 2 H2O2 = O2 + 2 H2O. Its function is as follows. Bifunctional enzyme with both catalase and broad-spectrum peroxidase activity. This is Catalase-peroxidase from Shewanella halifaxensis (strain HAW-EB4).